We begin with the raw amino-acid sequence, 245 residues long: Small ribosomal subunit protein uS2 (245 aa).

Residues 226 to 245 (GGGANVGEMENPPVEATADA) form a disordered region.

The protein belongs to the universal ribosomal protein uS2 family.

The polypeptide is Small ribosomal subunit protein uS2 (Erythrobacter litoralis (strain HTCC2594)).